Here is a 171-residue protein sequence, read N- to C-terminus: Antimicrobial protein CAP18 (171 aa).

The first 29 residues, 1-29, serve as a signal peptide directing secretion; it reads METHKHGPSLAWWSLLLLLLGLLMPPAIA. 2 cysteine pairs are disulfide-bonded: C85–C96 and C107–C124.

Belongs to the cathelicidin family. Neutrophils.

Its subcellular location is the secreted. Its function is as follows. CAP18 binds to the lipid A moiety of bacterial lipopolysaccharides (LPS), a glycolipid present in the outer membrane of all Gram-negative bacteria. Has antibiotic activity. This Oryctolagus cuniculus (Rabbit) protein is Antimicrobial protein CAP18 (CAP18).